The following is a 142-amino-acid chain: Large ribosomal subunit protein uL13 (142 aa).

Belongs to the universal ribosomal protein uL13 family. In terms of assembly, part of the 50S ribosomal subunit.

This protein is one of the early assembly proteins of the 50S ribosomal subunit, although it is not seen to bind rRNA by itself. It is important during the early stages of 50S assembly. In Francisella tularensis subsp. mediasiatica (strain FSC147), this protein is Large ribosomal subunit protein uL13.